A 333-amino-acid polypeptide reads, in one-letter code: Probable G-protein coupled receptor 174 (333 aa).

Over 1 to 27 (MPANYTCTRPDGDNTDFRYFIYAVTYT) the chain is Extracellular. A glycan (N-linked (GlcNAc...) asparagine) is linked at Asn-4. A helical membrane pass occupies residues 28–48 (VILVPGLIGNILALWVFYGYM). The Cytoplasmic segment spans residues 49–53 (KETKR). Residues 54 to 74 (AVIFMINLAIADLLQVLSLPL) traverse the membrane as a helical segment. Residues 75 to 91 (RIFYYLNHDWPFGPGLC) are Extracellular-facing. The cysteines at positions 91 and 168 are disulfide-linked. A helical membrane pass occupies residues 92 to 112 (MFCFYLKYVNMYASIYFLVCI). At 113–134 (SVRRFWFLMYPFRFHDCKQKYD) the chain is on the cytoplasmic side. The chain crosses the membrane as a helical span at residues 135-155 (LYISIAGWLIICLACVLFPLL). At 156-182 (RTSDDTSGNRTKCFVDLPTRNVNLAQS) the chain is on the extracellular side. N-linked (GlcNAc...) asparagine glycosylation occurs at Asn-164. A helical transmembrane segment spans residues 183–203 (VVMMTIGELIGFVTPLLIVLY). The Cytoplasmic segment spans residues 204–231 (CTWKTVLSLQDKYPMAQDLGEKQKALKM). Residues 232–252 (ILTCAGVFLICFAPYHFSFPL) form a helical membrane-spanning segment. Topologically, residues 253-269 (DFLVKSNEIKSCLARRV) are extracellular. The helical transmembrane segment at 270-290 (ILIFHSVALCLASLNSCLDPV) threads the bilayer. Topologically, residues 291–333 (IYYFSTNEFRRRLSRQDLHDSIQLHAKSFVSNHTASTMTPELC) are cytoplasmic.

The protein belongs to the G-protein coupled receptor 1 family. As to quaternary structure, interacts with GNA13. Interacts with CCL21.

The protein localises to the cell membrane. Its function is as follows. G-protein-coupled receptor of lysophosphatidylserine (LysoPS) that plays different roles in immune response. Plays a negative role in regulatory T-cell accumulation and homeostasis. Under inflammatory conditions where LysoPS production increases, contributes to the down-regulation of regulatory T-cell activity to favor effector response. Mediates the suppression of IL-2 production in activated T-lymphocytes leading to inhibition of growth, proliferation and differentiation of T-cells. Mechanistically, acts via G(s)-containing heterotrimeric G proteins to trigger elevated cyclic AMP levels and protein kinase A/PKA activity, which may in turn act to antagonize proximal TCR signaling. Plays an important role in the initial period of sepsis through the regulation of macrophage polarization and pro- and anti-inflammatory cytokine secretions. Upon testosterone treatment, acts as a receptor for CCL21 and subsequently triggers through G(q)-alpha and G(12)/G(13) proteins a calcium flux leading to chemotactic effects on activated B-cells. Signals via GNA13 and PKA to promote CD86 up-regulation by follicular B-cells. The protein is Probable G-protein coupled receptor 174 (GPR174) of Homo sapiens (Human).